Reading from the N-terminus, the 181-residue chain is CAPA peptides (181 aa).

The signal sequence occupies residues 1–22 (MQDNRFFILMILLVFSTSLNQG). The propeptide occupies 23–29 (QKLKAND). Residue Ile-41 is modified to Isoleucine amide. A propeptide spanning residues 44 to 54 (NSEISSFSRSE) is cleaved from the precursor. At Ile-65 the chain carries Isoleucine amide. The propeptide occupies 68-181 (SDVSSFDNLN…ENERDTANFL (114 aa)). The interval 159 to 181 (TQGQGGYTPRLGRENERDTANFL) is disordered. Residues 169–181 (LGRENERDTANFL) are compositionally biased toward basic and acidic residues.

In terms of processing, a pyrokinin potentially constituted by residues Asn-158 to Gly-170 has so far not been detected and might be completely absent in ants. In terms of tissue distribution, periviscerokinin 1 and 2 are expressed in central brain, antennal lobes and gnathal, thoracic and abominal ganglia. Periviscerokinin 2 is also expressed in the retrocerebral complex (at protein level).

The protein resides in the secreted. Periviscerokinins mediate visceral muscle contractile activity (myotropic activity). This Camponotus floridanus (Florida carpenter ant) protein is CAPA peptides.